Here is an 805-residue protein sequence, read N- to C-terminus: Kinesin-like protein Klp10A (805 aa).

The tract at residues 1–274 (MDMITVGQSV…FVPLLDGQAV (274 aa)) is globular. Disordered regions lie at residues 68–94 (QHAA…SAIG) and 117–211 (IPNP…RRSH). The segment covering 80 to 94 (APMNLSRNPTQSAIG) has biased composition (polar residues). Residues 123–136 (SSNSVNTNSNSNTT) are compositionally biased toward low complexity. Serine 157 is subject to Phosphoserine. The segment covering 158-179 (QAATGQQQTRIASAVPNNTLPN) has biased composition (polar residues). The span at 180 to 200 (PSAAASAGPAAQGVATAATTQ) shows a compositional bias: low complexity. Residues 205-244 (ASTRRSHALKEVERLKENREKRRARQAEMKEEKVALMNQD) adopt a coiled-coil conformation. A Kinesin motor domain is found at 278-610 (QITVCVRKRP…LRYADRVKEL (333 aa)). 368-375 (GQTGSGKT) contributes to the ATP binding site. Threonine 630 is subject to Phosphothreonine. The segment at 633–688 (EEEEELNMVHPHSHQLHPNSHAPASQSNNQRAPASHHSGAVIHNNNNNNNKNGNAG) is disordered. Polar residues predominate over residues 648–664 (LHPNSHAPASQSNNQRA). Residues 676–688 (NNNNNNNKNGNAG) are compositionally biased toward low complexity. Phosphoserine is present on residues serine 795, serine 797, and serine 800.

This sequence belongs to the TRAFAC class myosin-kinesin ATPase superfamily. Kinesin family. MCAK/KIF2 subfamily. As to quaternary structure, interacts with Alms1a (via C-terminus). Expressed in male germline stem cells and spermatogonia (at protein level).

The protein localises to the cytoplasm. It is found in the cytoskeleton. The protein resides in the microtubule organizing center. It localises to the centrosome. Its subcellular location is the spindle pole. The protein localises to the chromosome. It is found in the centromere. Functionally, required during anaphase to drive sister chromatid separation to promote flux by actively depolymerizing kinetochore microtubules at their pole-associated minus ends, thereby moving chromatids through a 'poleward flux'. Involved in asymmetric cell division of sensory organ precursor (SOP) cells by playing a role in the asymmetric localization of Sara-expressing endosomes to the pIIa daughter cell but not to the pIIb cell. Klp98A targets Sara-expressing endosomes to the central spindle which is symmetrically arranged in early cell division. During late cytokinesis, central spindle asymmetry is generated by enrichment of Patronin on the pIIb side which protects microtubules from depolymerization by Klp10A while unprotected microtubules on the pIIa side are disassembled by Klp10A, leading to the asymmetric delivery of Sara-expressing endosomes to the pIIa daughter cell. The polypeptide is Kinesin-like protein Klp10A (Drosophila melanogaster (Fruit fly)).